Reading from the N-terminus, the 173-residue chain is Shikimate kinase 2 (173 aa).

12–17 is an ATP binding site; it reads GCGKTT. Mg(2+) contacts are provided by threonine 16 and aspartate 32. Substrate is bound by residues aspartate 34, arginine 58, and glycine 79. The tract at residues 112-126 is LID domain; it reads QASPQAHQRPTLTGR. Arginine 120 provides a ligand contact to ATP. A substrate-binding site is contributed by arginine 139. Glutamine 155 serves as a coordination point for ATP.

Monomer. Mg(2+) is required as a cofactor.

It localises to the cytoplasm. It carries out the reaction shikimate + ATP = 3-phosphoshikimate + ADP + H(+). Its pathway is metabolic intermediate biosynthesis; chorismate biosynthesis; chorismate from D-erythrose 4-phosphate and phosphoenolpyruvate: step 5/7. Inhibited by chloride and sulfate ions. Catalyzes the specific phosphorylation of the 3-hydroxyl group of shikimic acid using ATP as a cosubstrate. This is Shikimate kinase 2 (aroL) from Dickeya chrysanthemi (Pectobacterium chrysanthemi).